A 521-amino-acid polypeptide reads, in one-letter code: MAP kinase-activated protein kinase mak-1 (521 aa).

Residues 1-12 (MMFEYEEDEDPM) are compositionally biased toward acidic residues. Residues 1-36 (MMFEYEEDEDPMEQQKHEEFKHHSTDHSGSPQENPF) are disordered. Basic and acidic residues predominate over residues 13 to 26 (EQQKHEEFKHHSTD). A Protein kinase domain is found at 144–405 (TISAEIIGIG…IHELMATPLV (262 aa)). Residues 150-158 (IGIGESGKV) and Lys173 contribute to the ATP site. Residue Asp266 is the Proton acceptor of the active site.

Belongs to the protein kinase superfamily. CAMK Ser/Thr protein kinase family. May interact (via protein kinase domain) with unc-22 (via protein kinase and CRD domains). It depends on Mg(2+) as a cofactor. Autophosphorylated in vitro. As to expression, expressed in body wall muscles (at protein level). Expressed in intestine.

The protein resides in the cytoplasm. It localises to the myofibril. Its subcellular location is the sarcomere. The protein localises to the a band. It carries out the reaction L-seryl-[protein] + ATP = O-phospho-L-seryl-[protein] + ADP + H(+). It catalyses the reaction L-threonyl-[protein] + ATP = O-phospho-L-threonyl-[protein] + ADP + H(+). In terms of biological role, serine/threonine-protein kinase which may play a role in body wall muscle contraction. May phosphorylate unc-22/twitchin. This Caenorhabditis elegans protein is MAP kinase-activated protein kinase mak-1.